A 223-amino-acid chain; its full sequence is Ribosomal RNA small subunit methyltransferase Nep1 (223 aa).

S-adenosyl-L-methionine contacts are provided by residues Gly181, Gly186, and 199 to 204 (LYREPL).

Belongs to the class IV-like SAM-binding methyltransferase superfamily. RNA methyltransferase NEP1 family. In terms of assembly, homodimer.

It carries out the reaction a pseudouridine in rRNA + S-adenosyl-L-methionine = an N(1)-methylpseudouridine in rRNA + S-adenosyl-L-homocysteine + H(+). Its function is as follows. Methyltransferase involved in ribosomal biogenesis. Specifically catalyzes the N1-methylation of the pseudouridine corresponding to position 914 in M.jannaschii 16S rRNA. This chain is Ribosomal RNA small subunit methyltransferase Nep1, found in Pyrococcus furiosus (strain ATCC 43587 / DSM 3638 / JCM 8422 / Vc1).